A 263-amino-acid polypeptide reads, in one-letter code: Lens fiber major intrinsic protein (263 aa).

The Cytoplasmic segment spans residues 1–12 (MWELRSASFWRA). A helical transmembrane segment spans residues 13-30 (IFAEFFATLFYVFFGLGA). The Extracellular segment spans residues 31 to 40 (SLRWAPGPLH). A helical transmembrane segment spans residues 41-59 (VLQVALAFGLALATLVQAV). Over 60–63 (GHIS) the chain is Cytoplasmic. An intramembrane region (discontinuously helical) is located at residues 64 to 76 (GAHVNPAVTFAFL). The NPA 1 motif lies at 68 to 70 (NPA). At 77 to 85 (VGSQMSLLR) the chain is on the cytoplasmic side. Residues 86 to 106 (AICYVVAQLLGAVAGAAVLYS) form a helical membrane-spanning segment. At 107-126 (VTPPAVRGNLALNTLHPGVS) the chain is on the extracellular side. Residues 127–147 (VGQATIVEIFLTLQFVLCIFA) traverse the membrane as a helical segment. The Cytoplasmic segment spans residues 148-157 (TYDERRNGRL). The chain crosses the membrane as a helical span at residues 158 to 175 (GSVALAVGFSLTLGHLFG). Topologically, residues 176 to 177 (MY) are extracellular. Residues 178–193 (YTGAGMNPARSFAPAI) constitute an intramembrane region (discontinuously helical). The short motif at 184–186 (NPA) is the NPA 2 element. Over 194–200 (LTRNFTN) the chain is Extracellular. Residues 201 to 218 (HWVYWVGPVIGAGLGSLL) traverse the membrane as a helical segment. Over 219 to 263 (YDFLLFPRLKSVSERLSILKGTRPSESNGQPEVTGEPVELKTQAL) the chain is Cytoplasmic. Positions 227–237 (LKSVSERLSIL) are interaction with CALM. Residues Ser-235, Ser-243, and Ser-245 each carry the phosphoserine modification. A disordered region spans residues 240–263 (TRPSESNGQPEVTGEPVELKTQAL).

It belongs to the MIP/aquaporin (TC 1.A.8) family. As to quaternary structure, homotetramer; each monomer provides an independent water pore. Two homotetramers on opposing membranes can dimerize, forming a cell-cell junction. Interacts with CALM; the calcium-calmodulin/CALM complex interacts with the cytoplasmic domains of two aquaporins, leading to channel closure. Interacts with BFSP1 (via C-terminus); prevents calcium-dependent inhibition of the water channel activity. Post-translationally, subject to partial proteolytic cleavage in the eye lens core. Partial proteolysis promotes interactions between tetramers from adjoining membranes. Fatty acylated at Met-1 and Lys-238. The acyl modifications, in decreasing order of ion abundance, are: oleoyl (C18:1) &gt; palmitoyl (C16:0) &gt; stearoyl (C18:0) &gt; eicosenoyl (C20:1) &gt; dihomo-gamma-linolenoyl (C20:3) &gt; palmitoleoyl (C16:1) &gt; eicosadienoyl (C20:2). Detected in eye lens (at protein level).

It localises to the cell membrane. The protein resides in the cell junction. The catalysed reaction is H2O(in) = H2O(out). The water channel activity is inhibited by calcium through calmodulin/CALM. Aquaporins form homotetrameric transmembrane channels, with each monomer independently mediating water transport across the plasma membrane along its osmotic gradient. Specifically expressed in lens fiber cells, this aquaporin is crucial for maintaining lens water homeostasis and transparency. Beyond water permeability, it also acts as a cell-to-cell adhesion molecule, forming thin junctions between lens fiber cells that are essential for maintaining the ordered structure and transparency of the lens. The sequence is that of Lens fiber major intrinsic protein from Ovis aries (Sheep).